Here is a 503-residue protein sequence, read N- to C-terminus: Cytochrome P450 6l1 (503 aa).

A heme-binding site is contributed by cysteine 438.

This sequence belongs to the cytochrome P450 family. The cofactor is heme. As to expression, detected only in testes and accessory glands of male adults.

Its subcellular location is the endoplasmic reticulum membrane. The protein resides in the microsome membrane. In Blattella germanica (German cockroach), this protein is Cytochrome P450 6l1 (CYP6L1).